The following is a 305-amino-acid chain: UDP-3-O-acyl-N-acetylglucosamine deacetylase (305 aa).

Residues His78, His237, and Asp241 each coordinate Zn(2+). His264 (proton donor) is an active-site residue.

The protein belongs to the LpxC family. Zn(2+) is required as a cofactor.

It carries out the reaction a UDP-3-O-[(3R)-3-hydroxyacyl]-N-acetyl-alpha-D-glucosamine + H2O = a UDP-3-O-[(3R)-3-hydroxyacyl]-alpha-D-glucosamine + acetate. It participates in glycolipid biosynthesis; lipid IV(A) biosynthesis; lipid IV(A) from (3R)-3-hydroxytetradecanoyl-[acyl-carrier-protein] and UDP-N-acetyl-alpha-D-glucosamine: step 2/6. Functionally, catalyzes the hydrolysis of UDP-3-O-myristoyl-N-acetylglucosamine to form UDP-3-O-myristoylglucosamine and acetate, the committed step in lipid A biosynthesis. The chain is UDP-3-O-acyl-N-acetylglucosamine deacetylase from Paraburkholderia xenovorans (strain LB400).